Here is a 486-residue protein sequence, read N- to C-terminus: ATP synthase subunit beta, chloroplastic (486 aa).

154–161 (GGAGVGKT) is an ATP binding site.

This sequence belongs to the ATPase alpha/beta chains family. F-type ATPases have 2 components, CF(1) - the catalytic core - and CF(0) - the membrane proton channel. CF(1) has five subunits: alpha(3), beta(3), gamma(1), delta(1), epsilon(1). CF(0) has four main subunits: a(1), b(1), b'(1) and c(9-12).

The protein resides in the plastid. The protein localises to the chloroplast thylakoid membrane. The catalysed reaction is ATP + H2O + 4 H(+)(in) = ADP + phosphate + 5 H(+)(out). Its function is as follows. Produces ATP from ADP in the presence of a proton gradient across the membrane. The catalytic sites are hosted primarily by the beta subunits. This chain is ATP synthase subunit beta, chloroplastic, found in Dennstaedtia punctilobula (Hay-scented fern).